Consider the following 278-residue polypeptide: Urease accessory protein UreD (278 aa).

The protein belongs to the UreD family. UreD, UreF and UreG form a complex that acts as a GTP-hydrolysis-dependent molecular chaperone, activating the urease apoprotein by helping to assemble the nickel containing metallocenter of UreC. The UreE protein probably delivers the nickel.

The protein localises to the cytoplasm. In terms of biological role, required for maturation of urease via the functional incorporation of the urease nickel metallocenter. This chain is Urease accessory protein UreD, found in Staphylococcus epidermidis (strain ATCC 12228 / FDA PCI 1200).